Reading from the N-terminus, the 241-residue chain is 1-(5-phosphoribosyl)-5-[(5-phosphoribosylamino)methylideneamino] imidazole-4-carboxamide isomerase (241 aa).

Asp10 serves as the catalytic Proton acceptor. The active-site Proton donor is Asp129.

The protein belongs to the HisA/HisF family.

It is found in the cytoplasm. It catalyses the reaction 1-(5-phospho-beta-D-ribosyl)-5-[(5-phospho-beta-D-ribosylamino)methylideneamino]imidazole-4-carboxamide = 5-[(5-phospho-1-deoxy-D-ribulos-1-ylimino)methylamino]-1-(5-phospho-beta-D-ribosyl)imidazole-4-carboxamide. Its pathway is amino-acid biosynthesis; L-histidine biosynthesis; L-histidine from 5-phospho-alpha-D-ribose 1-diphosphate: step 4/9. The chain is 1-(5-phosphoribosyl)-5-[(5-phosphoribosylamino)methylideneamino] imidazole-4-carboxamide isomerase from Salinispora arenicola (strain CNS-205).